Reading from the N-terminus, the 346-residue chain is N-acetyl-gamma-glutamyl-phosphate reductase (346 aa).

Cys-149 is a catalytic residue.

It belongs to the NAGSA dehydrogenase family. Type 1 subfamily.

It is found in the cytoplasm. The catalysed reaction is N-acetyl-L-glutamate 5-semialdehyde + phosphate + NADP(+) = N-acetyl-L-glutamyl 5-phosphate + NADPH + H(+). It functions in the pathway amino-acid biosynthesis; L-arginine biosynthesis; N(2)-acetyl-L-ornithine from L-glutamate: step 3/4. In terms of biological role, catalyzes the NADPH-dependent reduction of N-acetyl-5-glutamyl phosphate to yield N-acetyl-L-glutamate 5-semialdehyde. In Micrococcus luteus (strain ATCC 4698 / DSM 20030 / JCM 1464 / CCM 169 / CCUG 5858 / IAM 1056 / NBRC 3333 / NCIMB 9278 / NCTC 2665 / VKM Ac-2230) (Micrococcus lysodeikticus), this protein is N-acetyl-gamma-glutamyl-phosphate reductase.